Here is a 553-residue protein sequence, read N- to C-terminus: 5'-nucleotidase (553 aa).

A signal peptide spans 1–21; the sequence is MKQRLIVKTALSAAILATLAG. A lipid anchor (N-palmitoyl cysteine) is attached at Cys22. Cys22 carries the S-diacylglycerol cysteine lipid modification. Residues Asp45, His47, Asp88, Asn120, His221, His256, and Gln258 each coordinate a divalent metal cation. Substrate contacts are provided by residues Phe432 and 501–507; that span reads YNAAGGD.

It belongs to the 5'-nucleotidase family. Chloride is required as a cofactor. Requires Mg(2+) as cofactor.

The protein localises to the cell outer membrane. It carries out the reaction a ribonucleoside 5'-phosphate + H2O = a ribonucleoside + phosphate. Its function is as follows. Degradation of extracellular 5'-nucleotides for nutritional needs. The sequence is that of 5'-nucleotidase (nutA) from Vibrio vulnificus (strain CMCP6).